Consider the following 203-residue polypeptide: V-type ATP synthase subunit D (203 aa).

It belongs to the V-ATPase D subunit family.

In terms of biological role, produces ATP from ADP in the presence of a proton gradient across the membrane. The polypeptide is V-type ATP synthase subunit D (atpD) (Chlamydia muridarum (strain MoPn / Nigg)).